Consider the following 295-residue polypeptide: Bifunctional protein FolD (295 aa).

Residues 166-168, serine 195, and isoleucine 236 each bind NADP(+); that span reads GRS.

The protein belongs to the tetrahydrofolate dehydrogenase/cyclohydrolase family. Homodimer.

The catalysed reaction is (6R)-5,10-methylene-5,6,7,8-tetrahydrofolate + NADP(+) = (6R)-5,10-methenyltetrahydrofolate + NADPH. It catalyses the reaction (6R)-5,10-methenyltetrahydrofolate + H2O = (6R)-10-formyltetrahydrofolate + H(+). The protein operates within one-carbon metabolism; tetrahydrofolate interconversion. Its function is as follows. Catalyzes the oxidation of 5,10-methylenetetrahydrofolate to 5,10-methenyltetrahydrofolate and then the hydrolysis of 5,10-methenyltetrahydrofolate to 10-formyltetrahydrofolate. This chain is Bifunctional protein FolD, found in Pelodictyon phaeoclathratiforme (strain DSM 5477 / BU-1).